The following is a 150-amino-acid chain: Endoribonuclease YbeY (150 aa).

Residues histidine 113, histidine 117, and histidine 123 each contribute to the Zn(2+) site.

The protein belongs to the endoribonuclease YbeY family. Zn(2+) is required as a cofactor.

Its subcellular location is the cytoplasm. Single strand-specific metallo-endoribonuclease involved in late-stage 70S ribosome quality control and in maturation of the 3' terminus of the 16S rRNA. The protein is Endoribonuclease YbeY of Syntrophotalea carbinolica (strain DSM 2380 / NBRC 103641 / GraBd1) (Pelobacter carbinolicus).